A 369-amino-acid chain; its full sequence is DNA replication and repair protein RecF (369 aa).

Gly-30–Thr-37 contributes to the ATP binding site.

This sequence belongs to the RecF family.

Its subcellular location is the cytoplasm. In terms of biological role, the RecF protein is involved in DNA metabolism; it is required for DNA replication and normal SOS inducibility. RecF binds preferentially to single-stranded, linear DNA. It also seems to bind ATP. This is DNA replication and repair protein RecF from Chlorobium luteolum (strain DSM 273 / BCRC 81028 / 2530) (Pelodictyon luteolum).